The sequence spans 439 residues: Branched-chain amino acid permease BrnQ (439 aa).

Residues 1–9 (MTHQLKSRD) lie on the Cytoplasmic side of the membrane. The helical transmembrane segment at 10–30 (IIALGFMTFALFVGAGNIIFP) threads the bilayer. Over 31 to 43 (PMVGLQAGEHVWT) the chain is Periplasmic. The helical transmembrane segment at 44–64 (AAIGFLITAVGLPVLTVVALA) threads the bilayer. Topologically, residues 65 to 79 (KVGGGVDSLSTPIGK) are cytoplasmic. The chain crosses the membrane as a helical span at residues 80 to 100 (VAGLLLATVCYLAVGPLFATP). At 101–118 (RTATVSFEVGIAPLTGDS) the chain is on the periplasmic side. A helical transmembrane segment spans residues 119–139 (AMPLLIYSVVYFAIVILVSLY). Topologically, residues 140–149 (PGKLLDTVGN) are cytoplasmic. Residues 150–170 (FLAPLKIIALVILSVAAIVWP) form a helical membrane-spanning segment. Topologically, residues 171-189 (AGPISNALDAYQNAAFSNG) are periplasmic. Residues 190 to 210 (FVNGYLTMDTLGAMVFGIVIV) form a helical membrane-spanning segment. At 211–226 (NAARSRGVTEARLLTR) the chain is on the cytoplasmic side. A helical membrane pass occupies residues 227–247 (YTVWAGLMAGVGLTLLYLALF). The Periplasmic portion of the chain corresponds to 248–277 (RLGSDSATLVDQSANGAAILHAYVQHTFGG). The chain crosses the membrane as a helical span at residues 278-298 (AGSFLLAALIFIACLVTAVGL). Over 299 to 316 (TCACAEFFAQYIPLSYRT) the chain is Cytoplasmic. Residues 317–337 (LVFILGGFSMVVSNLGLSHLI) form a helical membrane-spanning segment. Gln-338 is a topological domain (periplasmic). A helical transmembrane segment spans residues 339–359 (ISIPVLTAIYPPCIALVVLSF). Topologically, residues 360–369 (TRSWWHNSTR) are cytoplasmic. Residues 370-390 (IIAPAMFISLLFGILDGIKAS) form a helical membrane-spanning segment. Over 391 to 404 (AFGDMLPAWSQRLP) the chain is Periplasmic. The helical transmembrane segment at 405-425 (LAEQGLAWLMPTVVMVILAII) threads the bilayer. Topologically, residues 426–439 (WDRAAGRQVTSSAH) are cytoplasmic.

This sequence belongs to the branched chain amino acid transporter family.

Its subcellular location is the cell inner membrane. Functionally, liv-II branched chain amino acid transport system, which transports leucine, valine and isoleucine. The chain is Branched-chain amino acid permease BrnQ from Salmonella typhimurium (strain LT2 / SGSC1412 / ATCC 700720).